We begin with the raw amino-acid sequence, 145 residues long: 3-hydroxyacyl-[acyl-carrier-protein] dehydratase FabZ (145 aa).

Residue H47 is part of the active site.

Belongs to the thioester dehydratase family. FabZ subfamily.

The protein localises to the cytoplasm. The catalysed reaction is a (3R)-hydroxyacyl-[ACP] = a (2E)-enoyl-[ACP] + H2O. In terms of biological role, involved in unsaturated fatty acids biosynthesis. Catalyzes the dehydration of short chain beta-hydroxyacyl-ACPs and long chain saturated and unsaturated beta-hydroxyacyl-ACPs. In Methylobacillus flagellatus (strain ATCC 51484 / DSM 6875 / VKM B-1610 / KT), this protein is 3-hydroxyacyl-[acyl-carrier-protein] dehydratase FabZ.